Reading from the N-terminus, the 238-residue chain is Demethylmenaquinone methyltransferase (238 aa).

Residues Thr60, Asp81, and 108–109 each bind S-adenosyl-L-methionine; that span reads NA.

This sequence belongs to the class I-like SAM-binding methyltransferase superfamily. MenG/UbiE family.

It catalyses the reaction a 2-demethylmenaquinol + S-adenosyl-L-methionine = a menaquinol + S-adenosyl-L-homocysteine + H(+). Its pathway is quinol/quinone metabolism; menaquinone biosynthesis; menaquinol from 1,4-dihydroxy-2-naphthoate: step 2/2. In terms of biological role, methyltransferase required for the conversion of demethylmenaquinol (DMKH2) to menaquinol (MKH2). This chain is Demethylmenaquinone methyltransferase, found in Oceanobacillus iheyensis (strain DSM 14371 / CIP 107618 / JCM 11309 / KCTC 3954 / HTE831).